The sequence spans 843 residues: Protein P (843 aa).

The interval 1–177 (MPLSYPHFRK…FCGSQYSWEQ (177 aa)) is terminal protein domain (TP). Positions 178-346 (ELQHGSTSLN…YCLSHIINLL (169 aa)) are spacer. Disordered regions lie at residues 228–255 (KQGQ…RWPA) and 284–314 (EANP…SVGS). Residues 239-249 (RSGRLRSRVHT) are compositionally biased toward basic residues. The segment at 347-690 (EDWGPCYEHG…YMNLYPVARQ (344 aa)) is polymerase/reverse transcriptase domain (RT). Positions 357–600 (EHHIRTPRTP…YNLHFMGYVI (244 aa)) constitute a Reverse transcriptase domain. 3 residues coordinate Mg(2+): D429, D551, and D552.

This sequence belongs to the hepadnaviridae P protein family.

It carries out the reaction DNA(n) + a 2'-deoxyribonucleoside 5'-triphosphate = DNA(n+1) + diphosphate. The enzyme catalyses Endonucleolytic cleavage to 5'-phosphomonoester.. With respect to regulation, activated by host HSP70 and HSP40 in vitro to be able to bind the epsilon loop of the pgRNA. Because deletion of the RNase H region renders the protein partly chaperone-independent, the chaperones may be needed indirectly to relieve occlusion of the RNA-binding site by this domain. Inhibited by several reverse-transcriptase inhibitors: Lamivudine, Adefovir and Entecavir. Functionally, multifunctional enzyme that converts the viral RNA genome into dsDNA in viral cytoplasmic capsids. This enzyme displays a DNA polymerase activity that can copy either DNA or RNA templates, and a ribonuclease H (RNase H) activity that cleaves the RNA strand of RNA-DNA heteroduplexes in a partially processive 3'- to 5'-endonucleasic mode. Neo-synthesized pregenomic RNA (pgRNA) are encapsidated together with the P protein, and reverse-transcribed inside the nucleocapsid. Initiation of reverse-transcription occurs first by binding the epsilon loop on the pgRNA genome, and is initiated by protein priming, thereby the 5'-end of (-)DNA is covalently linked to P protein. Partial (+)DNA is synthesized from the (-)DNA template and generates the relaxed circular DNA (RC-DNA) genome. After budding and infection, the RC-DNA migrates in the nucleus, and is converted into a plasmid-like covalently closed circular DNA (cccDNA). The activity of P protein does not seem to be necessary for cccDNA generation, and is presumably released from (+)DNA by host nuclear DNA repair machinery. This is Protein P from Hepatitis B virus genotype F2 subtype adw4q (isolate Senegal/9203) (HBV-F).